The chain runs to 308 residues: Glutathione synthetase (308 aa).

Residues 117-300 enclose the ATP-grasp domain; that stretch reads KLLPLSFPKF…LERDCWDYFE (184 aa). An ATP-binding site is contributed by 143–198; the sequence is YAEYGDIVLKPLYDYGGNGVCRICGRADVGAISSAMVERYEAPLVAQQFIDDISSD. Mg(2+)-binding residues include E271 and N273.

The protein belongs to the prokaryotic GSH synthase family. It depends on Mg(2+) as a cofactor. Mn(2+) serves as cofactor.

The enzyme catalyses gamma-L-glutamyl-L-cysteine + glycine + ATP = glutathione + ADP + phosphate + H(+). It participates in sulfur metabolism; glutathione biosynthesis; glutathione from L-cysteine and L-glutamate: step 2/2. This is Glutathione synthetase from Anaplasma centrale.